The primary structure comprises 193 residues: Oligoribonuclease (193 aa).

The Exonuclease domain occupies 14 to 177 (LIWIDLEMTG…SDIYDSIAEL (164 aa)). The active site involves tyrosine 135.

This sequence belongs to the oligoribonuclease family.

It localises to the cytoplasm. 3'-to-5' exoribonuclease specific for small oligoribonucleotides. This Xylella fastidiosa (strain Temecula1 / ATCC 700964) protein is Oligoribonuclease.